The sequence spans 634 residues: Chaperone protein HtpG (634 aa).

Positions 1–342 (MSVETQKETL…SNDLSLNVSR (342 aa)) are a; substrate-binding. The segment at 343–559 (EILQKDPVID…EQDLGLQMRQ (217 aa)) is b. Positions 560–634 (ILEASGQKVP…LNKLLVELSA (75 aa)) are c.

The protein belongs to the heat shock protein 90 family. Homodimer.

It is found in the cytoplasm. Its function is as follows. Molecular chaperone. Has ATPase activity. The sequence is that of Chaperone protein HtpG from Ectopseudomonas mendocina (strain ymp) (Pseudomonas mendocina).